A 221-amino-acid polypeptide reads, in one-letter code: Ribonuclease T (221 aa).

The Exonuclease domain occupies 21 to 195 (VVIDIESAGF…YDTIQTAYLF (175 aa)). Residues aspartate 24, glutamate 26, histidine 182, and aspartate 187 each coordinate Mg(2+). Histidine 182 (proton donor/acceptor) is an active-site residue.

This sequence belongs to the RNase T family. Homodimer. Mg(2+) serves as cofactor.

Functionally, trims short 3' overhangs of a variety of RNA species, leaving a one or two nucleotide 3' overhang. Responsible for the end-turnover of tRNA: specifically removes the terminal AMP residue from uncharged tRNA (tRNA-C-C-A). Also appears to be involved in tRNA biosynthesis. This chain is Ribonuclease T, found in Buchnera aphidicola subsp. Cinara cedri (strain Cc).